Reading from the N-terminus, the 915-residue chain is Rab3 GTPase-activating protein catalytic subunit (915 aa).

This sequence belongs to the Rab3-GAP catalytic subunit family. The Rab3 GTPase-activating complex is a heterodimer composed of rbg-1 and rbg-2.

It localises to the cytoplasm. Its function is as follows. Probable catalytic subunit of a GTPase activating protein that has specificity for Rab3 subfamily. Rab3 proteins are involved in regulated exocytosis of neurotransmitters and hormones. Specifically converts active Rab3-GTP to the inactive form Rab3-GDP. In Caenorhabditis elegans, this protein is Rab3 GTPase-activating protein catalytic subunit (rbg-1).